The sequence spans 164 residues: MTCQTYNLFVLSVIMIYYGHTASSLNLVQLQDDIDKLKADFNSSHSDVADGGPIIVEKLKNWTERNEKRIILSQIVSMYLEMLENTDKSKPHIKHISEELYTLKNNLPDGVKKVKDIMDLAKLQMNDLRIQRKAANELFSILQKLVDPPSSKRKRSHPQRRCNC.

A signal peptide spans 1–19; that stretch reads MTCQTYNLFVLSVIMIYYG. N-linked (GlcNAc...) asparagine glycans are attached at residues N42 and N61.

This sequence belongs to the type II (or gamma) interferon family. In terms of assembly, homodimer.

The protein resides in the secreted. Its function is as follows. Produced by lymphocytes activated by specific antigens or mitogens. IFN-gamma, in addition to having antiviral activity, has important immunoregulatory functions. It is a potent activator of macrophages, it has antiproliferative effects on transformed cells and it can potentiate the antiviral and antitumor effects of the type I interferons. The chain is Interferon gamma (IFNG) from Meleagris gallopavo (Wild turkey).